We begin with the raw amino-acid sequence, 344 residues long: Putative 2-hydroxyacid dehydrogenase YoaD (344 aa).

D193 contributes to the NAD(+) binding site. Residue R251 is part of the active site. D275 is a binding site for NAD(+). Residue E280 is part of the active site. Catalysis depends on H300, which acts as the Proton donor.

This sequence belongs to the D-isomer specific 2-hydroxyacid dehydrogenase family.

This is Putative 2-hydroxyacid dehydrogenase YoaD (yoaD) from Bacillus subtilis (strain 168).